The sequence spans 620 residues: Glutathione-regulated potassium-efflux system protein KefC (620 aa).

12 helical membrane passes run 4–24 (HTLI…PIAV), 26–46 (LGLG…PWGL), 54–74 (SILH…GLEL), 90–110 (GALQ…LLGL), 114–134 (VAEL…MQAM), 149–169 (FAVL…IPLL), 178–198 (MGAF…VVLL), 218–238 (VFSA…EEVG), 270–290 (GLLL…GTLL), 294–314 (LRIV…LWLI), 327–347 (WFAV…GAAQ), and 359–379 (SLTL…VILN). Residues 399–518 (QPRVIIAGFG…AGVEKPERET (120 aa)) form the RCK N-terminal domain. The interval 597–620 (GWQGTEEGKHTGNMADEPETKPSS) is disordered.

Belongs to the monovalent cation:proton antiporter 2 (CPA2) transporter (TC 2.A.37) family. KefC subfamily. As to quaternary structure, homodimer. Interacts with the regulatory subunit KefF.

The protein localises to the cell inner membrane. In terms of biological role, pore-forming subunit of a potassium efflux system that confers protection against electrophiles. Catalyzes K(+)/H(+) antiport. The chain is Glutathione-regulated potassium-efflux system protein KefC from Escherichia coli O8 (strain IAI1).